We begin with the raw amino-acid sequence, 1041 residues long: FHIP family protein CG3558 (1041 aa).

Position 490 is a phosphoserine (Ser490). Disordered stretches follow at residues 619–648, 792–818, 858–879, 903–947, and 959–986; these read RPADEESEATDTTVATTASEADMDHNSSSL, KGNEGSPMHHSQQQQMVTNSGQQQGQL, SMFSRKSASTSTAPPNGSSASS, DGRG…SNSS, and SNTTTHSASTLHGLDGGPSTGGFNSEPA. Residues 628 to 637 show a composition bias toward polar residues; that stretch reads TDTTVATTAS. Ser797 carries the post-translational modification Phosphoserine. Residues 800 to 818 are compositionally biased toward polar residues; it reads HHSQQQQMVTNSGQQQGQL. Residues 903 to 925 are compositionally biased toward polar residues; that stretch reads DGRGISQAQTSAGTCETSLSTQP. The segment covering 927–947 has biased composition (low complexity); sequence AGASRTGANATSTAASGSNSS. The span at 959 to 968 shows a compositional bias: polar residues; the sequence is SNTTTHSAST.

This sequence belongs to the FHIP family.

This Drosophila melanogaster (Fruit fly) protein is FHIP family protein CG3558.